We begin with the raw amino-acid sequence, 429 residues long: MKTSLETLKGLSRSLTIDLPIDIFNQKMDKILQKMALEVNIDGFRKGKVPISIVRKRFGNNANSDVINEIVNETLTDALAQVKLTPVAQPVITKVDSNSNKNFSYTVEFEVFPKIKIADFSELSIEQTKVNITKADEQKTLDGLKDRLTEYKAVQCKSKMGDRLSIDFKGLINGETFDGGEAKDFKIVLGKGSMIKGFEEGLIDVAYSSRVVLDLTFPKDYYMDKLASKDVTFEININEIASPKELKLDETFAKKFGEKNMNALRVSMKEQMRVEVDGRIGHLNKNAIFDKLTTANPFNVPQHSIDNEAQNLFKAMQDRMQHQGLSTQGEMPITAFNDEAQRRVKLGLLVNQISRDYKLSVSMKQIDEKLKEISKTYGENAQQMIDFYNQDPTRKSSIELLVVEKMVQDLILDKAQVTFKQKKFQEITQ.

Residues 161-246 (GDRLSIDFKG…INEIASPKEL (86 aa)) enclose the PPIase FKBP-type domain.

The protein belongs to the FKBP-type PPIase family. Tig subfamily.

It is found in the cytoplasm. The catalysed reaction is [protein]-peptidylproline (omega=180) = [protein]-peptidylproline (omega=0). Involved in protein export. Acts as a chaperone by maintaining the newly synthesized protein in an open conformation. Functions as a peptidyl-prolyl cis-trans isomerase. This is Trigger factor from Vesicomyosocius okutanii subsp. Calyptogena okutanii (strain HA).